The following is a 446-amino-acid chain: Cytochrome P450 monooxygenase ptmP (446 aa).

The chain crosses the membrane as a helical span at residues 19–39 (VTVIWILMALVLLAYLILPNP). A heme-binding site is contributed by Cys385. N-linked (GlcNAc...) asparagine glycosylation occurs at Asn430.

Belongs to the cytochrome P450 family. It depends on heme as a cofactor.

It is found in the membrane. It functions in the pathway secondary metabolite biosynthesis. In terms of biological role, cytochrome P450 monooxygenase; part of the gene cluster that mediates the biosynthesis of the indole diterpenes penitrems. The geranylgeranyl diphosphate (GGPP) synthase ptmG catalyzes the first step in penitrem biosynthesis via conversion of farnesyl pyrophosphate and isopentyl pyrophosphate into geranylgeranyl pyrophosphate (GGPP). Condensation of indole-3-glycerol phosphate with GGPP by the prenyl transferase ptmC then forms 3-geranylgeranylindole (3-GGI). Epoxidation by the FAD-dependent monooxygenase ptmM leads to a epoxidized-GGI that is substrate of the terpene cyclase ptmB for cyclization to yield paspaline. Paspaline is subsequently converted to 13-desoxypaxilline by the cytochrome P450 monooxygenase ptmP, the latter being then converted to paxilline by the cytochrome P450 monooxygenase ptmQ. Paxilline is converted to beta-paxitriol via C-10 ketoreduction by the short-chain dehydrogenase ptmH which can be monoprenylated at the C-20 by the indole diterpene prenyltransferase ptmD. A two-step elimination (acetylation and elimination) process performed by the O-acetyltransferase ptmV and ptmI leads to the production of the prenylated form of penijanthine. The FAD-linked oxidoreductase ptmO then converts the prenylated form of penijanthine into PC-M5 which is in turn transformed into PC-M4 by the aromatic dimethylallyltransferase ptmE. Five sequential oxidative transformations performed by the cytochrome P450 monooxygenases ptmK, ptmU, ptmL, ptmN and ptmJ yield the various penitrem compounds. PtmK, ptmU and ptmM are involved in the formation of the key bicyclic ring of penitrem C via the formation of the intermediates secopenitrem D and penitrem D. PtmL catalyzes the epoxidation of penitrem D and C to yield penitrem B and F, respectively. PtmJ catalyzes the last benzylic hydroxylation to convert penitrem B to prenitrem E and penitrem F to penitrem A. The sequence is that of Cytochrome P450 monooxygenase ptmP from Penicillium ochrochloron.